We begin with the raw amino-acid sequence, 178 residues long: Peptide deformylase (178 aa).

Positions 102 and 144 each coordinate Fe cation. Glu-145 is a catalytic residue. Residue His-148 coordinates Fe cation.

The protein belongs to the polypeptide deformylase family. Fe(2+) serves as cofactor.

The enzyme catalyses N-terminal N-formyl-L-methionyl-[peptide] + H2O = N-terminal L-methionyl-[peptide] + formate. In terms of biological role, removes the formyl group from the N-terminal Met of newly synthesized proteins. Requires at least a dipeptide for an efficient rate of reaction. N-terminal L-methionine is a prerequisite for activity but the enzyme has broad specificity at other positions. The protein is Peptide deformylase of Leptospira interrogans serogroup Icterohaemorrhagiae serovar copenhageni (strain Fiocruz L1-130).